The primary structure comprises 438 residues: Lipid-A-disaccharide synthase (438 aa).

This sequence belongs to the LpxB family.

It catalyses the reaction a lipid X + a UDP-2-N,3-O-bis[(3R)-3-hydroxyacyl]-alpha-D-glucosamine = a lipid A disaccharide + UDP + H(+). The protein operates within bacterial outer membrane biogenesis; LPS lipid A biosynthesis. Functionally, condensation of UDP-2,3-diacylglucosamine and 2,3-diacylglucosamine-1-phosphate to form lipid A disaccharide, a precursor of lipid A, a phosphorylated glycolipid that anchors the lipopolysaccharide to the outer membrane of the cell. The protein is Lipid-A-disaccharide synthase of Xanthomonas campestris pv. campestris (strain 8004).